A 291-amino-acid polypeptide reads, in one-letter code: uncharacterized protein (291 aa).

Solcar repeat units follow at residues 15–93, 104–190, and 201–287; these read PGPV…IKKS, PRTV…IKQS, and LSTV…VMEI. A run of 6 helical transmembrane segments spans residues 21–41, 70–90, 108–128, 169–189, 201–221, and 259–280; these read IIAGGVAGAIEISITYPAEFA, STVIVGNSLKAAVRFFAFDSI, LAGLGAGVAESVLVLTPFESI, TVARQAANSGVRFTAYNSIKQ, LSTVTTFLVGSVAGIITVYCT, and FWSGATPRLARLILSGGIVFTV.

Belongs to the mitochondrial carrier (TC 2.A.29) family.

The protein resides in the mitochondrion inner membrane. This is an uncharacterized protein from Schizosaccharomyces pombe (strain 972 / ATCC 24843) (Fission yeast).